A 461-amino-acid polypeptide reads, in one-letter code: Fumarate hydratase class II (461 aa).

Substrate is bound by residues 97–99, 127–130, 137–139, and T185; these read SGT, HPND, and SSN. The active-site Proton donor/acceptor is the H186. Residue S316 is part of the active site. Substrate-binding positions include S317 and 322–324; that span reads KVN.

It belongs to the class-II fumarase/aspartase family. Fumarase subfamily. As to quaternary structure, homotetramer.

The protein resides in the cytoplasm. It carries out the reaction (S)-malate = fumarate + H2O. It functions in the pathway carbohydrate metabolism; tricarboxylic acid cycle; (S)-malate from fumarate: step 1/1. In terms of biological role, involved in the TCA cycle. Catalyzes the stereospecific interconversion of fumarate to L-malate. The protein is Fumarate hydratase class II of Staphylococcus haemolyticus (strain JCSC1435).